The following is a 112-amino-acid chain: uncharacterized protein (112 aa).

Fe cation contacts are provided by C39, C105, and C107.

This sequence belongs to the HesB/IscA family. Ycf83 subfamily.

The protein localises to the plastid. It is found in the chloroplast. This is an uncharacterized protein from Galdieria sulphuraria (Red alga).